Reading from the N-terminus, the 391-residue chain is Formate-dependent phosphoribosylglycinamide formyltransferase (391 aa).

N(1)-(5-phospho-beta-D-ribosyl)glycinamide-binding positions include 20 to 21 and glutamate 80; that span reads EL. Residues arginine 112, lysine 153, 158–163, 193–196, and glutamate 201 each bind ATP; these read SSGKGQ and EGFI. The ATP-grasp domain occupies 117-306; sequence RLAAETLGLP…EFALHVRAIL (190 aa). Mg(2+) contacts are provided by glutamate 265 and glutamate 277. Residues aspartate 284, lysine 354, and 361 to 362 contribute to the N(1)-(5-phospho-beta-D-ribosyl)glycinamide site; that span reads RR.

Belongs to the PurK/PurT family. In terms of assembly, homodimer.

The catalysed reaction is N(1)-(5-phospho-beta-D-ribosyl)glycinamide + formate + ATP = N(2)-formyl-N(1)-(5-phospho-beta-D-ribosyl)glycinamide + ADP + phosphate + H(+). It functions in the pathway purine metabolism; IMP biosynthesis via de novo pathway; N(2)-formyl-N(1)-(5-phospho-D-ribosyl)glycinamide from N(1)-(5-phospho-D-ribosyl)glycinamide (formate route): step 1/1. Involved in the de novo purine biosynthesis. Catalyzes the transfer of formate to 5-phospho-ribosyl-glycinamide (GAR), producing 5-phospho-ribosyl-N-formylglycinamide (FGAR). Formate is provided by PurU via hydrolysis of 10-formyl-tetrahydrofolate. The chain is Formate-dependent phosphoribosylglycinamide formyltransferase from Shewanella sp. (strain ANA-3).